A 202-amino-acid chain; its full sequence is CASP-like protein 2B1 (202 aa).

At 1–29 (MSYLGVGVSPGNVPVYHGSNLKVIDKRVR) the chain is on the cytoplasmic side. A helical transmembrane segment spans residues 30-50 (LAELVLRCLICGLGVLAAVLV). At 51-72 (GTDTQVKEIFSIQKKARFTDMK) the chain is on the extracellular side. Residues 73 to 93 (ALVFLVIANGIAAAYSLLQGV) form a helical membrane-spanning segment. Residues 94-109 (RCVVGMVRGSALFSKP) lie on the Cytoplasmic side of the membrane. A helical transmembrane segment spans residues 110-130 (LAWAIFSGDQMMAYLTVAAVA). Over 131-164 (AAAQSAVFAKLGQPELQWMKICNMYGKFCNQVGE) the chain is Extracellular. A helical transmembrane segment spans residues 165–185 (GIASALLVSVSMVVLSCISAF). Residues 186–202 (SLFRLYGANKGKDCTRW) are Cytoplasmic-facing.

This sequence belongs to the Casparian strip membrane proteins (CASP) family. Homodimer and heterodimers.

It localises to the cell membrane. In Ricinus communis (Castor bean), this protein is CASP-like protein 2B1.